The chain runs to 396 residues: 3-amino-4-hydroxybenzoic acid synthase (396 aa).

The tract at residues 1 to 29 (MSSSPSPSPSSSSSSSASSSASSSPSSSS) is disordered.

Belongs to the archaeal-type DHQ synthase family. GriH subfamily. In terms of assembly, monomer. Mn(2+) is required as a cofactor.

It catalyses the reaction 2-amino-4,5-dihydroxy-6-oxo-7-(phosphooxy)heptanoate = 3-amino-4-hydroxybenzoate + phosphate + 2 H2O + H(+). Its function is as follows. Catalyzes the cyclization of 2-amino-4,5-dihydroxy-6-one-heptanoic acid-7-phosphate to yield 3-amino-4-hydroxybenzoic acid (3,4-AHBA). The chain is 3-amino-4-hydroxybenzoic acid synthase (griH) from Streptomyces griseus subsp. griseus (strain JCM 4626 / CBS 651.72 / NBRC 13350 / KCC S-0626 / ISP 5235).